The sequence spans 377 residues: Molybdenum import ATP-binding protein ModC (377 aa).

An ABC transporter domain is found at 17 to 254 (ITGDEAIRAR…LDLPFAHDED (238 aa)). 52–59 (GHSGSGKT) contacts ATP. In terms of domain architecture, Mop spans 313–377 (DSSILNVLPA…AQVKGVALLR (65 aa)).

It belongs to the ABC transporter superfamily. Molybdate importer (TC 3.A.1.8) family. In terms of assembly, the complex is composed of two ATP-binding proteins (ModC), two transmembrane proteins (ModB) and a solute-binding protein (ModA).

Its subcellular location is the cell inner membrane. The enzyme catalyses molybdate(out) + ATP + H2O = molybdate(in) + ADP + phosphate + H(+). In terms of biological role, part of the ABC transporter complex ModABC involved in molybdenum import. Responsible for energy coupling to the transport system. This is Molybdenum import ATP-binding protein ModC from Aromatoleum aromaticum (strain DSM 19018 / LMG 30748 / EbN1) (Azoarcus sp. (strain EbN1)).